A 116-amino-acid chain; its full sequence is Nucleoid-associated protein Tfu_0045 (116 aa).

It belongs to the YbaB/EbfC family. In terms of assembly, homodimer.

Its subcellular location is the cytoplasm. It is found in the nucleoid. In terms of biological role, binds to DNA and alters its conformation. May be involved in regulation of gene expression, nucleoid organization and DNA protection. This chain is Nucleoid-associated protein Tfu_0045, found in Thermobifida fusca (strain YX).